An 890-amino-acid chain; its full sequence is Receptor like protein 23 (890 aa).

The first 22 residues, 1–22, serve as a signal peptide directing secretion; sequence MSKALLHLHFLSLFLLCCVCHS. The Extracellular segment spans residues 23–850; it reads SIFTLNFHFT…EEEEEVLNGR (828 aa). N-linked (GlcNAc...) asparagine glycans are attached at residues Asn58, Asn70, Asn91, Asn109, and Asn145. LRR repeat units lie at residues 97–121, 123–145, 146–171, 173–195, 196–218, 220–243, 244–268, 270–290, 291–316, 318–339, 340–363, 364–389, 391–411, 412–436, 438–461, 462–485, 487–506, 507–527, 528–551, 553–575, 577–598, 599–623, 626–650, 699–724, 726–747, 748–771, and 773–796; these read FHQL…GFGN, KRLE…SFSN, LTML…GLRK, IVLD…LFEL, HQLR…KFGN, HRLE…ISNL, TRLT…NLTN, YELD…LLTL, PFLA…STSS, LEIM…ISKL, INLK…LFSS, LKSL…SYIP, TLEM…ILKT, LKEL…LWSL, LLQS…ILVN, SSVL…PLSI, GFGV…ICNR, SSLA…PPCL, RNLE…LCDG, SLRT…FVNC, SLKF…WLKA, LPNL…HQGP, FPEL…YFVN, LTSY…GLLK, LIAV…MANL, ENLE…LGSI, and FLAY…QITG. N-linked (GlcNAc...) asparagine glycans are attached at residues Asn189, Asn207, Asn242, and Asn265. Asn311 is a glycosylation site (N-linked (GlcNAc...) asparagine). The N-linked (GlcNAc...) asparagine glycan is linked to Asn351. A glycan (N-linked (GlcNAc...) asparagine) is linked at Asn461. Asn505 and Asn518 each carry an N-linked (GlcNAc...) asparagine glycan. Asn574 carries an N-linked (GlcNAc...) asparagine glycan. N-linked (GlcNAc...) asparagine glycosylation occurs at Asn730. Asn778 is a glycosylation site (N-linked (GlcNAc...) asparagine). Residues 851 to 871 form a helical membrane-spanning segment; it reads AVAIGYGSGLLLGLAIAQVIA. The Cytoplasmic segment spans residues 872-890; the sequence is SYKPEWLVKIIGLNKRRKR.

Belongs to the RLP family. As to quaternary structure, directly interacts with a 20-mer fragment (nlp20) from NLPs through its extracellular LRR domain. Component of a trimeric complex composed of RLP23, SOBIR1 and BAK1. BAK1 is recruited into a pre-formed RLP23-SOBIR1 complex in a ligand-dependent manner. Interacts with SOBIR1.

It is found in the cell membrane. Its function is as follows. Involved in the perception of necrosis and ethylene-inducing peptide 1-like proteins (NLPs), that act as extracellular signals mediating immune activation. Component of the RLP23-SOBIR1-BAK1 complex that mediates NLP-triggered immunity. The protein is Receptor like protein 23 of Arabidopsis thaliana (Mouse-ear cress).